The primary structure comprises 165 residues: MAQVVEVLVEGGKASPGPPLGPAIGPLGLNVKQVVDEINKATKEFEGMQVPVKIIVEDPKKKTFRIEVGIPPTSQLIKKELGIPKGSSEAGHTPAGNLTMEQVIKIAKMKIDQMLAPNLKAAAKEVIGTALSMGVTVEGKDPREVQREIDEGVYDELFAKAEEAQ.

Belongs to the universal ribosomal protein uL11 family. In terms of assembly, part of the ribosomal stalk of the 50S ribosomal subunit. Interacts with L10 and the large rRNA to form the base of the stalk. L10 forms an elongated spine to which L12 dimers bind in a sequential fashion forming a multimeric L10(L12)X complex.

Forms part of the ribosomal stalk which helps the ribosome interact with GTP-bound translation factors. The chain is Large ribosomal subunit protein uL11 from Thermococcus kodakarensis (strain ATCC BAA-918 / JCM 12380 / KOD1) (Pyrococcus kodakaraensis (strain KOD1)).